The following is a 270-amino-acid chain: 4-hydroxy-tetrahydrodipicolinate reductase (270 aa).

Residue 7-12 (GVSGRM) coordinates NAD(+). Arg-34 is an NADP(+) binding site. NAD(+) contacts are provided by residues 97 to 99 (GTT) and 121 to 124 (SGNM). Residue His-155 is the Proton donor/acceptor of the active site. His-156 contributes to the (S)-2,3,4,5-tetrahydrodipicolinate binding site. The active-site Proton donor is Lys-159. 165–166 (GT) contacts (S)-2,3,4,5-tetrahydrodipicolinate.

Belongs to the DapB family.

It localises to the cytoplasm. The enzyme catalyses (S)-2,3,4,5-tetrahydrodipicolinate + NAD(+) + H2O = (2S,4S)-4-hydroxy-2,3,4,5-tetrahydrodipicolinate + NADH + H(+). The catalysed reaction is (S)-2,3,4,5-tetrahydrodipicolinate + NADP(+) + H2O = (2S,4S)-4-hydroxy-2,3,4,5-tetrahydrodipicolinate + NADPH + H(+). The protein operates within amino-acid biosynthesis; L-lysine biosynthesis via DAP pathway; (S)-tetrahydrodipicolinate from L-aspartate: step 4/4. Its function is as follows. Catalyzes the conversion of 4-hydroxy-tetrahydrodipicolinate (HTPA) to tetrahydrodipicolinate. The chain is 4-hydroxy-tetrahydrodipicolinate reductase from Allorhizobium ampelinum (strain ATCC BAA-846 / DSM 112012 / S4) (Agrobacterium vitis (strain S4)).